The sequence spans 93 residues: Cell division protein CrgA (93 aa).

Transmembrane regions (helical) follow at residues 31 to 51 and 70 to 90; these read VWFV…LMVF and LGPW…LLTM.

The protein belongs to the CrgA family.

The protein resides in the cell membrane. Functionally, involved in cell division. The chain is Cell division protein CrgA from Mycobacterium leprae (strain Br4923).